Reading from the N-terminus, the 176-residue chain is MSENIAKRYVKALIEVCKKDELNDVLKGLKAIVSAFSVAKFNDIIKSPTVSKKDKISLILSFLKEPNVKIENLLKILMKNGRISLLPQIYDGIKESIALSNNEYQGKIYTKENLDEPTIKLLETNFSKKLNANIKFVCIAGNYTGVKIDISDLGYEISFSIDRLKSAMSEYILKAI.

Belongs to the ATPase delta chain family. F-type ATPases have 2 components, F(1) - the catalytic core - and F(0) - the membrane proton channel. F(1) has five subunits: alpha(3), beta(3), gamma(1), delta(1), epsilon(1). F(0) has three main subunits: a(1), b(2) and c(10-14). The alpha and beta chains form an alternating ring which encloses part of the gamma chain. F(1) is attached to F(0) by a central stalk formed by the gamma and epsilon chains, while a peripheral stalk is formed by the delta and b chains.

It localises to the cell inner membrane. F(1)F(0) ATP synthase produces ATP from ADP in the presence of a proton or sodium gradient. F-type ATPases consist of two structural domains, F(1) containing the extramembraneous catalytic core and F(0) containing the membrane proton channel, linked together by a central stalk and a peripheral stalk. During catalysis, ATP synthesis in the catalytic domain of F(1) is coupled via a rotary mechanism of the central stalk subunits to proton translocation. Functionally, this protein is part of the stalk that links CF(0) to CF(1). It either transmits conformational changes from CF(0) to CF(1) or is implicated in proton conduction. This chain is ATP synthase subunit delta, found in Campylobacter hominis (strain ATCC BAA-381 / DSM 21671 / CCUG 45161 / LMG 19568 / NCTC 13146 / CH001A).